We begin with the raw amino-acid sequence, 55 residues long: Large ribosomal subunit protein bL33 (55 aa).

Residues 1-11 (MAKSGRDKIKL) show a composition bias toward basic and acidic residues. The disordered stretch occupies residues 1-28 (MAKSGRDKIKLESTAGTGHFYTTTKNKR). Positions 14–24 (TAGTGHFYTTT) are enriched in polar residues.

This sequence belongs to the bacterial ribosomal protein bL33 family.

The chain is Large ribosomal subunit protein bL33 from Janthinobacterium sp. (strain Marseille) (Minibacterium massiliensis).